Consider the following 1190-residue polypeptide: Pumilio homolog 1 (1190 aa).

Disordered regions lie at residues 38 to 74, 491 to 531, 611 to 675, and 744 to 777; these read LTSG…GVAG, SNSA…QQTD, ANGP…NSSL, and GPVG…LNLG. Composition is skewed to low complexity over residues 491–508, 518–531, 628–675, and 765–777; these read SNSA…GQQQ, PLTP…QQTD, QQPQ…NSSL, and LSSH…LNLG. The PUM-HD domain maps to 830–1172; that stretch reads GRSRLLEDFR…HILAKLEKYY (343 aa). Pumilio repeat units lie at residues 850–885, 886–921, 922–959, 960–995, 996–1031, 1032–1067, 1068–1103, and 1107–1146; these read EIAG…LVFN, EILQ…ALAE, RIRG…EMVR, ELDG…FIID, AFKS…PILE, ELHQ…KIVA, EIRG…MLID, and TMND…IVMH. Residues 865 to 869 form an adenine-nucleotide binding in RNA target region; the sequence is SRFIQ. The uracil-nucleotide binding in RNA target stretch occupies residues 901-905; it reads NYVIQ. The interval 937–941 is adenine-nucleotide binding in RNA target; it reads CRVIQ. A non-specific-nucleotide binding in RNA target region spans residues 975 to 979; it reads NHVVQ. Residues 1011-1015 form an adenine-nucleotide binding in RNA target region; the sequence is CRVIQ. The interval 1047 to 1051 is uracil-nucleotide binding in RNA target; sequence NYVIQ. A guanine-nucleotide binding in RNA target region spans residues 1083–1087; sequence SNVVE. A uracil-nucleotide binding in RNA target region spans residues 1126–1130; it reads NYVVQ.

As to quaternary structure, interacts with cpeb1-a; interacts with unphosphorylated cpeb1-a but not phosphorylated. Component of a complex with papd4, sympk, tacc3, parn, dazl and cpeb1. In terms of processing, phosphorylated. Phosphorylation takes place at the time of dissociation of cpeb1-a from pum1 and the translational activation of ccnb1 mRNA. Present in oocytes (at protein level).

Its subcellular location is the cytoplasm. The protein resides in the P-body. It localises to the cytoplasmic granule. Sequence-specific RNA-binding protein that acts as a post-transcriptional repressor by binding the 3'-UTR of mRNA targets. Binds to an RNA consensus sequence, the Pumilio Response Element (PRE), 5'-UGUANAUA-3', that is related to the Nanos Response Element (NRE). Mediates post-transcriptional repression of transcripts via different mechanisms: acts via direct recruitment of deadenylase complexes leading to translational inhibition and mRNA degradation. Also mediates deadenylation-independent repression by promoting accessibility of miRNAs. Acts as a post-transcriptional repressor of ccnb1 mRNA during oocyte maturation. This chain is Pumilio homolog 1, found in Xenopus laevis (African clawed frog).